A 149-amino-acid chain; its full sequence is FAD synthase (149 aa).

ATP contacts are provided by residues 15-16 (VF), 20-23 (HVGH), and Asp101.

The protein belongs to the archaeal FAD synthase family. In terms of assembly, homodimer. Requires a divalent metal cation as cofactor.

The catalysed reaction is FMN + ATP + H(+) = FAD + diphosphate. It participates in cofactor biosynthesis; FAD biosynthesis; FAD from FMN: step 1/1. Functionally, catalyzes the transfer of the AMP portion of ATP to flavin mononucleotide (FMN) to produce flavin adenine dinucleotide (FAD) coenzyme. This is FAD synthase from Thermococcus kodakarensis (strain ATCC BAA-918 / JCM 12380 / KOD1) (Pyrococcus kodakaraensis (strain KOD1)).